A 215-amino-acid polypeptide reads, in one-letter code: 7-methyl-GTP pyrophosphatase (215 aa).

Residue Asp79 is the Proton acceptor of the active site.

Belongs to the Maf family. YceF subfamily. Requires a divalent metal cation as cofactor.

It is found in the cytoplasm. It catalyses the reaction N(7)-methyl-GTP + H2O = N(7)-methyl-GMP + diphosphate + H(+). Its function is as follows. Nucleoside triphosphate pyrophosphatase that hydrolyzes 7-methyl-GTP (m(7)GTP). May have a dual role in cell division arrest and in preventing the incorporation of modified nucleotides into cellular nucleic acids. The chain is 7-methyl-GTP pyrophosphatase from Burkholderia mallei (strain ATCC 23344).